We begin with the raw amino-acid sequence, 1196 residues long: Calcium-activated potassium channel subunit alpha-1 (1196 aa).

Topologically, residues 1–52 (MATWNASQIILNSMSNIIESPQSKPRPVMASNGASLFIPVTMEVPCDQGTRM) are extracellular. A helical membrane pass occupies residues 53 to 73 (WWAFLASSMVTFFGGLFIILV). Topologically, residues 74–146 (WRTFKYLWTV…MISAQTLTGR (73 aa)) are cytoplasmic. A helical transmembrane segment spans residues 147-167 (VLVVTVFALSIGALMIYFIDS). Residues 168-182 (SNPIESCQNFYKDFT) are Extracellular-facing. Residues 183–203 (LQIDMAFNIFFLLYFGLRFIA) traverse the membrane as a helical segment. Over 204–207 (ANDK) the chain is Cytoplasmic. The helical transmembrane segment at 208 to 228 (LWFWLEVNSVVDFFTVPPVFV) threads the bilayer. Topologically, residues 229-232 (SVYL) are extracellular. The helical; Voltage-sensor transmembrane segment at 233-253 (NRSWLGLRFLRALRLIQFSEI) threads the bilayer. The Cytoplasmic portion of the chain corresponds to 254-268 (LQFLNILKTSNSIKL). A helical membrane pass occupies residues 269–289 (VNLCSIFISTWLTAAGFIHLV). The Extracellular segment spans residues 290–303 (ENSGDPWRNFENSQ). Positions 304-326 (DLSYWECMYLLMVTMSTVGYGDV) form an intramembrane region, pore-forming. The Selectivity for potassium signature appears at 320-323 (TVGY). At 327–335 (YAKTTLGRL) the chain is on the extracellular side. The helical transmembrane segment at 336–356 (FMVFFILGGLAMFASYVPEII) threads the bilayer. Over 357–1196 (ELIGNRKKYG…PPIREVEDEC (840 aa)) the chain is Cytoplasmic. The 143-residue stretch at 375 to 517 (RKHIVVCGHI…WNWKDGDDAI (143 aa)) folds into the RCK N-terminal 1 domain. Positions 407, 430, and 432 each coordinate Mg(2+). The segment at 524 to 544 (LGFIAQSCLAQGLSTMLANLF) is segment S7. The segment at 581–601 (LSFPAVCELCFVKLKLLMIAI) is segment S8. The interval 645–649 (CKACH) is heme-binding motif. The tract at residues 672–697 (SALSPKKKQRNGGMRHSPNTSPNMMR) is disordered. A segment S9 region spans residues 748–768 (VLSGHVVVCIFGDMTSALIGV). Residues 750-894 (SGHVVVCIFG…MERSSPDNSP (145 aa)) form the RCK N-terminal 2 domain. The Calcium bowl motif lies at 914–936 (TELVNDSNVQFLDQDDDDDPDTE). Ca(2+) is bound by residues Gln923, Asp926, Asp929, and Asp931. Positions 943–963 (FACGTAFAVSVLDSLMSATYF) are segment S10. The segment covering 1098-1119 (ASLSHSSHSSHSSSKKSSSVTS) has biased composition (low complexity). The disordered stretch occupies residues 1098-1149 (ASLSHSSHSSHSSSKKSSSVTSILHTASANRQNRVKARDSRDKQKMGQAEKK). The span at 1120-1129 (ILHTASANRQ) shows a compositional bias: polar residues. Over residues 1133–1149 (KARDSRDKQKMGQAEKK) the composition is skewed to basic and acidic residues.

It belongs to the potassium channel family. Calcium-activated (TC 1.A.1.3) subfamily. KCa1.1/KCNMA1 sub-subfamily. In terms of assembly, homotetramer; which constitutes the calcium-activated potassium channel. As to expression, expressed in both the somites and neural tube of 1 day embryos. Within the nervous system, it is restricted to dorsal parts, and expressed centrally in regions dedicated to processing of sensory information. Six hours later, it is expressed segmentally within the somites. At this time, it is expressed in a primary sensory organ, the trigeminal ganglion. By 2 days, it is also expressed in other primary sensory organs, such as the otic vesicle, and the eye. Within the retina, it is expressed to an internal layer. In the developing otic vesicle, it is abundantly expressed near the apical surface. Isoform 3 is neural-specific, and is only expressed during late stages of neuronal differentiation.

Its subcellular location is the cell membrane. It carries out the reaction K(+)(in) = K(+)(out). With respect to regulation, ethanol and carbon monoxide-bound heme increase channel activation. Heme inhibits channel activation. Functionally, potassium channel activated by both membrane depolarization or increase in cytosolic Ca(2+) that mediates export of K(+). It is also activated by the concentration of cytosolic Mg(2+). Its activation dampens the excitatory events that elevate the cytosolic Ca(2+) concentration and/or depolarize the cell membrane. It therefore contributes to repolarization of the membrane potential. Plays a key role in controlling excitability in a number of systems, such as regulation of the contraction of smooth muscle, the tuning of hair cells in the cochlea, regulation of transmitter release, and innate immunity. In smooth muscles, its activation by high level of Ca(2+), caused by ryanodine receptors in the sarcoplasmic reticulum, regulates the membrane potential. In cochlea cells, its number and kinetic properties partly determine the characteristic frequency of each hair cell and thereby helps to establish a tonotopic map. Highly sensitive to both iberiotoxin (IbTx) and charybdotoxin (CTX). This is Calcium-activated potassium channel subunit alpha-1 (kcnma1) from Xenopus laevis (African clawed frog).